A 199-amino-acid polypeptide reads, in one-letter code: Casparian strip membrane protein 2 (199 aa).

Residues 1-37 (MMRGSTEIDMPESSSVSKGTAPLIAAPMKEKGGYKKG) lie on the Cytoplasmic side of the membrane. Residues 38–58 (IAIFDFILRLAAIATALAAAA) traverse the membrane as a helical segment. Residues 59–87 (SMGTSDETLPFFTQFFQFQASYDDLPTFQ) lie on the Extracellular side of the membrane. A helical membrane pass occupies residues 88–108 (FFVIAMAIVAGYLVLSLPFSI). At 109–120 (VAIVRPHAAGPR) the chain is on the cytoplasmic side. Residues 121-141 (LLLIILDTVALTLNTAAGAAA) form a helical membrane-spanning segment. The Extracellular portion of the chain corresponds to 142 to 173 (AAIVYLAHNGNSSTNWLAICQQFGDFCQKNSG). A glycan (N-linked (GlcNAc...) asparagine) is linked at N152. A helical transmembrane segment spans residues 174 to 194 (AVVASFITVVIFVFLLVLSAF). Residues 195–199 (ALRRH) lie on the Cytoplasmic side of the membrane.

This sequence belongs to the Casparian strip membrane proteins (CASP) family. As to quaternary structure, homodimer and heterodimers.

It is found in the cell membrane. In terms of biological role, regulates membrane-cell wall junctions and localized cell wall deposition. Required for establishment of the Casparian strip membrane domain (CSD) and the subsequent formation of Casparian strips, a cell wall modification of the root endodermis that determines an apoplastic barrier between the intraorganismal apoplasm and the extraorganismal apoplasm and prevents lateral diffusion. This chain is Casparian strip membrane protein 2, found in Populus trichocarpa (Western balsam poplar).